Consider the following 74-residue polypeptide: ATP synthase subunit 9, mitochondrial (74 aa).

2 consecutive transmembrane segments (helical) span residues Ile8–Phe28 and Ile50–Ile70.

This sequence belongs to the ATPase C chain family. F-type ATPases have 2 components, CF(1) - the catalytic core - and CF(0) - the membrane proton channel. CF(1) has five subunits: alpha(3), beta(3), gamma(1), delta(1), epsilon(1). CF(0) has three main subunits: a, b and c.

The protein resides in the mitochondrion membrane. Functionally, mitochondrial membrane ATP synthase (F(1)F(0) ATP synthase or Complex V) produces ATP from ADP in the presence of a proton gradient across the membrane which is generated by electron transport complexes of the respiratory chain. F-type ATPases consist of two structural domains, F(1) - containing the extramembraneous catalytic core and F(0) - containing the membrane proton channel, linked together by a central stalk and a peripheral stalk. During catalysis, ATP synthesis in the catalytic domain of F(1) is coupled via a rotary mechanism of the central stalk subunits to proton translocation. Part of the complex F(0) domain. A homomeric c-ring of probably 10 subunits is part of the complex rotary element. The sequence is that of ATP synthase subunit 9, mitochondrial (atp9) from Schizosaccharomyces pombe (strain 972 / ATCC 24843) (Fission yeast).